A 311-amino-acid chain; its full sequence is Pyrimidine-specific ribonucleoside hydrolase RihA (311 aa).

His-240 is an active-site residue.

It belongs to the IUNH family. RihA subfamily.

Functionally, hydrolyzes cytidine or uridine to ribose and cytosine or uracil, respectively. The sequence is that of Pyrimidine-specific ribonucleoside hydrolase RihA from Salmonella schwarzengrund (strain CVM19633).